The sequence spans 343 residues: GTPase Obg (343 aa).

One can recognise an Obg domain in the interval methionine 1–isoleucine 159. Positions alanine 160–aspartate 327 constitute an OBG-type G domain. GTP-binding positions include glycine 166–serine 173, phenylalanine 191–histidine 195, aspartate 212–glycine 215, serine 279–aspartate 282, and serine 308–alanine 310. Mg(2+) contacts are provided by serine 173 and threonine 193.

The protein belongs to the TRAFAC class OBG-HflX-like GTPase superfamily. OBG GTPase family. Monomer. Mg(2+) serves as cofactor.

It localises to the cytoplasm. An essential GTPase which binds GTP, GDP and possibly (p)ppGpp with moderate affinity, with high nucleotide exchange rates and a fairly low GTP hydrolysis rate. Plays a role in control of the cell cycle, stress response, ribosome biogenesis and in those bacteria that undergo differentiation, in morphogenesis control. In Methylobacterium sp. (strain 4-46), this protein is GTPase Obg.